The following is a 201-amino-acid chain: Large ribosomal subunit protein bL25 (201 aa).

The protein belongs to the bacterial ribosomal protein bL25 family. CTC subfamily. In terms of assembly, part of the 50S ribosomal subunit; part of the 5S rRNA/L5/L18/L25 subcomplex. Contacts the 5S rRNA. Binds to the 5S rRNA independently of L5 and L18.

This is one of the proteins that binds to the 5S RNA in the ribosome where it forms part of the central protuberance. This is Large ribosomal subunit protein bL25 from Burkholderia cenocepacia (strain HI2424).